The primary structure comprises 500 residues: Aspartyl/glutamyl-tRNA(Asn/Gln) amidotransferase subunit B (500 aa).

This sequence belongs to the GatB/GatE family. GatB subfamily. Heterotrimer of A, B and C subunits.

It catalyses the reaction L-glutamyl-tRNA(Gln) + L-glutamine + ATP + H2O = L-glutaminyl-tRNA(Gln) + L-glutamate + ADP + phosphate + H(+). The catalysed reaction is L-aspartyl-tRNA(Asn) + L-glutamine + ATP + H2O = L-asparaginyl-tRNA(Asn) + L-glutamate + ADP + phosphate + 2 H(+). Its function is as follows. Allows the formation of correctly charged Asn-tRNA(Asn) or Gln-tRNA(Gln) through the transamidation of misacylated Asp-tRNA(Asn) or Glu-tRNA(Gln) in organisms which lack either or both of asparaginyl-tRNA or glutaminyl-tRNA synthetases. The reaction takes place in the presence of glutamine and ATP through an activated phospho-Asp-tRNA(Asn) or phospho-Glu-tRNA(Gln). The sequence is that of Aspartyl/glutamyl-tRNA(Asn/Gln) amidotransferase subunit B from Rhizobium meliloti (strain 1021) (Ensifer meliloti).